A 108-amino-acid polypeptide reads, in one-letter code: MEQFECITVEEAYQKLHQGAAVLVDIRDPQSYAMGHAPQAFHLTNDTLGAFMREYDFDTAVMVMCYHGNSSKGAAQYLLQQGYDAVYSIDGGFEAWHRHFPADVANGA.

One can recognise a Rhodanese domain in the interval 17 to 105 (HQGAAVLVDI…WHRHFPADVA (89 aa)). Residue Cys65 is the Cysteine persulfide intermediate of the active site.

The protein belongs to the GlpE family.

The protein localises to the cytoplasm. It carries out the reaction thiosulfate + hydrogen cyanide = thiocyanate + sulfite + 2 H(+). It catalyses the reaction thiosulfate + [thioredoxin]-dithiol = [thioredoxin]-disulfide + hydrogen sulfide + sulfite + 2 H(+). Its function is as follows. Transferase that catalyzes the transfer of sulfur from thiosulfate to thiophilic acceptors such as cyanide or dithiols. May function in a CysM-independent thiosulfate assimilation pathway by catalyzing the conversion of thiosulfate to sulfite, which can then be used for L-cysteine biosynthesis. The protein is Thiosulfate sulfurtransferase GlpE of Salmonella arizonae (strain ATCC BAA-731 / CDC346-86 / RSK2980).